Here is a 469-residue protein sequence, read N- to C-terminus: MLCLCLYVPIAGEAQTEFQYFESKGLPTELKSIFKLSVFIPSQEFSTYRQWKQKIVQAGDKDLDGQLDFEEFVHYLQDHEKKLRLVFKSLDKKNDGRIDAQEIMQSLRDLGVKISEQQAEKILKSMDKNGTMTIDWNEWRDYHLLHPVENIPEIILYWKHSTIFDVGENLTVPDEFTVEERQTGMWWRHLVAGGGAGAVSRTCTAPLDRLKVLMQVHASRSNNMCIIGGFTQMIREGGAKSLWRGNGINVLKIAPESAIKFMAYEQMKRLVGSDQETLRIHERLVAGSLAGAIAQSSIYPMEVLKTRMALRKTGQYSGMLDCAKRILAKEGVAAFYKGYIPNMLGIIPYAGIDLAVYETLKNTWLQRYAVNSADPGVFVLLACGTISSTCGQLASYPLALVRTRMQAQASIEGAPEVTMSSLFKQILRTEGAFGLYRGLAPNFMKVIPAVSISYVVYENLKITLGVQSR.

The interval Met-1 to Asp-165 is regulatory N-terminal domain. The Mitochondrial intermembrane segment spans residues Met-1–His-189. 3 EF-hand domains span residues Thr-47 to Glu-80, Asp-78 to Lys-113, and Ile-114 to Glu-149. 5 residues coordinate Ca(2+): Asp-60, Asp-62, Asp-64, Gln-66, and Glu-71. The tract at residues Ile-151–His-160 is linker region. The interval Val-166 to Arg-469 is C-terminal transmembrane transporter domain. Solcar repeat units lie at residues Gly-184–Leu-270, Leu-278–Thr-363, and Pro-375–Thr-463. The helical transmembrane segment at Leu-190–Leu-207 threads the bilayer. The Mitochondrial matrix portion of the chain corresponds to Asp-208–Arg-244. The chain crosses the membrane as a helical span at residues Gly-245–Tyr-264. At Glu-265 to Gly-287 the chain is on the mitochondrial intermembrane side. The helical transmembrane segment at Ser-288–Met-301 threads the bilayer. At Glu-302–Lys-337 the chain is on the mitochondrial matrix side. Residues Gly-338–Tyr-357 traverse the membrane as a helical segment. Topologically, residues Glu-358–Leu-380 are mitochondrial intermembrane. A helical membrane pass occupies residues Leu-381 to Leu-398. Residues Ala-399–Arg-437 lie on the Mitochondrial matrix side of the membrane. The helical transmembrane segment at Gly-438–Tyr-457 threads the bilayer. Residues Glu-458–Arg-469 are Mitochondrial intermembrane-facing.

The protein belongs to the mitochondrial carrier (TC 2.A.29) family. As to expression, mainly present in the liver and the skeletal muscle (at protein level).

The protein resides in the mitochondrion inner membrane. The catalysed reaction is Mg(2+)(out) + phosphate(in) + ATP(out) = Mg(2+)(in) + phosphate(out) + ATP(in). Activated by an increase in cytosolic calcium levels that induce a conformational change of the N-terminal regulatory domain, uncapping the channel and allowing transport. Its function is as follows. Electroneutral antiporter that most probably mediates the transport of adenyl nucleotides through the inner mitochondrial membrane. Originally identified as an ATP-magnesium/inorganic phosphate antiporter, it could have a broader specificity for adenyl nucleotides. By regulating the mitochondrial matrix adenyl nucleotide pool could adapt to changing cellular energetic demands and indirectly regulate adenyl nucleotide-dependent metabolic pathways. This Rattus norvegicus (Rat) protein is Mitochondrial adenyl nucleotide antiporter SLC25A25.